A 237-amino-acid chain; its full sequence is Adenosine 5'-phosphosulfate reductase (237 aa).

[4Fe-4S] cluster-binding residues include C123, C124, C206, and C209. C232 (nucleophile; cysteine thiosulfonate intermediate) is an active-site residue.

The protein belongs to the PAPS reductase family. CysH subfamily. It depends on [4Fe-4S] cluster as a cofactor.

Its subcellular location is the cytoplasm. The catalysed reaction is [thioredoxin]-disulfide + sulfite + AMP + 2 H(+) = adenosine 5'-phosphosulfate + [thioredoxin]-dithiol. The protein operates within sulfur metabolism; hydrogen sulfide biosynthesis; sulfite from sulfate. Functionally, catalyzes the formation of sulfite from adenosine 5'-phosphosulfate (APS) using thioredoxin as an electron donor. This is Adenosine 5'-phosphosulfate reductase from Mycobacteroides abscessus (strain ATCC 19977 / DSM 44196 / CCUG 20993 / CIP 104536 / JCM 13569 / NCTC 13031 / TMC 1543 / L948) (Mycobacterium abscessus).